Here is a 445-residue protein sequence, read N- to C-terminus: Tubulin beta-3 chain (445 aa).

GTP contacts are provided by Gln11, Glu69, Ser138, Gly142, Thr143, Gly144, Asn204, and Asn226. Glu69 is a binding site for Mg(2+). Over residues 417 to 426 (DLVSEYQQYQ) the composition is skewed to polar residues. Residues 417–445 (DLVSEYQQYQEASADDEADEFDEEEGDEE) form a disordered region. Residues 429 to 445 (SADDEADEFDEEEGDEE) are compositionally biased toward acidic residues.

Belongs to the tubulin family. In terms of assembly, dimer of alpha and beta chains. A typical microtubule is a hollow water-filled tube with an outer diameter of 25 nm and an inner diameter of 15 nM. Alpha-beta heterodimers associate head-to-tail to form protofilaments running lengthwise along the microtubule wall with the beta-tubulin subunit facing the microtubule plus end conferring a structural polarity. Microtubules usually have 13 protofilaments but different protofilament numbers can be found in some organisms and specialized cells. Mg(2+) is required as a cofactor.

It is found in the cytoplasm. Its subcellular location is the cytoskeleton. In terms of biological role, tubulin is the major constituent of microtubules, a cylinder consisting of laterally associated linear protofilaments composed of alpha- and beta-tubulin heterodimers. Microtubules grow by the addition of GTP-tubulin dimers to the microtubule end, where a stabilizing cap forms. Below the cap, tubulin dimers are in GDP-bound state, owing to GTPase activity of alpha-tubulin. This chain is Tubulin beta-3 chain (TUBB3), found in Oomycete-like sp. (strain MacKay2000).